Reading from the N-terminus, the 1358-residue chain is DNA-directed RNA polymerase subunit beta (1358 aa).

This sequence belongs to the RNA polymerase beta chain family. The RNAP catalytic core consists of 2 alpha, 1 beta, 1 beta' and 1 omega subunit. When a sigma factor is associated with the core the holoenzyme is formed, which can initiate transcription.

The enzyme catalyses RNA(n) + a ribonucleoside 5'-triphosphate = RNA(n+1) + diphosphate. Functionally, DNA-dependent RNA polymerase catalyzes the transcription of DNA into RNA using the four ribonucleoside triphosphates as substrates. The protein is DNA-directed RNA polymerase subunit beta of Francisella tularensis subsp. tularensis (strain FSC 198).